Here is a 626-residue protein sequence, read N- to C-terminus: Transketolase-like protein 2 (626 aa).

His-37 serves as a coordination point for substrate. Thiamine diphosphate-binding positions include Ser-40, His-77, and 123-125 (GSL). Residue Asp-155 coordinates Mg(2+). The thiamine diphosphate site is built by Gly-156 and Asn-185. Residues Asn-185 and Leu-187 each coordinate Mg(2+). Thiamine diphosphate-binding residues include Lys-247 and His-261. Substrate-binding residues include His-261 and Ser-348. Positions 369 and 395 each coordinate thiamine diphosphate. Glu-369 functions as the Proton donor in the catalytic mechanism. The substrate site is built by His-419 and Asp-427. Gln-431 is a thiamine diphosphate binding site. Arg-477 provides a ligand contact to substrate.

Belongs to the transketolase family. In terms of assembly, homodimer. The cofactor is Mg(2+). Ca(2+) serves as cofactor. Mn(2+) is required as a cofactor. Requires Co(2+) as cofactor. It depends on thiamine diphosphate as a cofactor.

The enzyme catalyses D-sedoheptulose 7-phosphate + D-glyceraldehyde 3-phosphate = aldehydo-D-ribose 5-phosphate + D-xylulose 5-phosphate. Functionally, plays an essential role in total transketolase activity and cell proliferation in cancer cells; after transfection with anti-TKTL1 siRNA, total transketolase activity dramatically decreases and proliferation was significantly inhibited in cancer cells. Plays a pivotal role in carcinogenesis. The protein is Transketolase-like protein 2 (TKTL2) of Bos taurus (Bovine).